Reading from the N-terminus, the 428-residue chain is NADP-specific glutamate dehydrogenase (428 aa).

Positions 68 and 92 each coordinate substrate. Lysine 104 acts as the Proton donor in catalysis. Residues threonine 188 and asparagine 219 each contribute to the NADP(+) site. Serine 356 lines the substrate pocket.

The protein belongs to the Glu/Leu/Phe/Val dehydrogenases family. As to quaternary structure, homohexamer.

The catalysed reaction is L-glutamate + NADP(+) + H2O = 2-oxoglutarate + NH4(+) + NADPH + H(+). Catalyzes the reversible oxidative deamination of glutamate to alpha-ketoglutarate and ammonia. In Synechocystis sp. (strain ATCC 27184 / PCC 6803 / Kazusa), this protein is NADP-specific glutamate dehydrogenase (gdhA).